The chain runs to 65 residues: Myotoxin-1 (65 aa).

The first 22 residues, 1 to 22, serve as a signal peptide directing secretion; sequence MKILYLLFAFLFLAFLSEPGNA. Intrachain disulfides connect Cys-26–Cys-58, Cys-33–Cys-52, and Cys-40–Cys-59.

The protein belongs to the crotamine-myotoxin family. As to quaternary structure, monomer. In terms of tissue distribution, expressed by the venom gland.

The protein localises to the secreted. Cationic peptide that possesses multiple functions. It acts as a cell-penetrating peptide (CPP), and as a potent voltage-gated potassium channel (Kv) inhibitor. It exhibits antimicrobial activities, hind limb paralysis, and severe muscle necrosis by a non-enzymatic mechanism. The chain is Myotoxin-1 from Crotalus durissus terrificus (South American rattlesnake).